Here is a 358-residue protein sequence, read N- to C-terminus: Peptide chain release factor 1 (358 aa).

Gln-236 bears the N5-methylglutamine mark.

The protein belongs to the prokaryotic/mitochondrial release factor family. Methylated by PrmC. Methylation increases the termination efficiency of RF1.

Its subcellular location is the cytoplasm. Peptide chain release factor 1 directs the termination of translation in response to the peptide chain termination codons UAG and UAA. In Corynebacterium aurimucosum (strain ATCC 700975 / DSM 44827 / CIP 107346 / CN-1) (Corynebacterium nigricans), this protein is Peptide chain release factor 1.